The primary structure comprises 181 residues: Large ribosomal subunit protein uL6 (181 aa).

This sequence belongs to the universal ribosomal protein uL6 family. In terms of assembly, part of the 50S ribosomal subunit.

This protein binds to the 23S rRNA, and is important in its secondary structure. It is located near the subunit interface in the base of the L7/L12 stalk, and near the tRNA binding site of the peptidyltransferase center. This is Large ribosomal subunit protein uL6 from Phytoplasma mali (strain AT).